The chain runs to 299 residues: Protoheme IX farnesyltransferase (299 aa).

A run of 8 helical transmembrane segments spans residues 24 to 44 (VVAL…DQGM), 46 to 66 (WNAL…AAAI), 94 to 114 (VHAL…LAWG), 118 to 138 (LTAW…TLFL), 146 to 166 (IVLG…SVTG), 172 to 192 (ALLL…ALAV), 232 to 252 (LPFI…ALGV), and 278 to 298 (ITYL…PVTL).

This sequence belongs to the UbiA prenyltransferase family. Protoheme IX farnesyltransferase subfamily.

The protein resides in the cell inner membrane. It catalyses the reaction heme b + (2E,6E)-farnesyl diphosphate + H2O = Fe(II)-heme o + diphosphate. The protein operates within porphyrin-containing compound metabolism; heme O biosynthesis; heme O from protoheme: step 1/1. Its function is as follows. Converts heme B (protoheme IX) to heme O by substitution of the vinyl group on carbon 2 of heme B porphyrin ring with a hydroxyethyl farnesyl side group. The chain is Protoheme IX farnesyltransferase from Hahella chejuensis (strain KCTC 2396).